Consider the following 343-residue polypeptide: tRNA N6-adenosine threonylcarbamoyltransferase (343 aa).

H115 and H119 together coordinate Fe cation. Substrate-binding positions include L137 to G141, D170, G183, D187, and N276. D306 is a Fe cation binding site.

It belongs to the KAE1 / TsaD family. Requires Fe(2+) as cofactor.

It is found in the cytoplasm. The enzyme catalyses L-threonylcarbamoyladenylate + adenosine(37) in tRNA = N(6)-L-threonylcarbamoyladenosine(37) in tRNA + AMP + H(+). Functionally, required for the formation of a threonylcarbamoyl group on adenosine at position 37 (t(6)A37) in tRNAs that read codons beginning with adenine. Is involved in the transfer of the threonylcarbamoyl moiety of threonylcarbamoyl-AMP (TC-AMP) to the N6 group of A37, together with TsaE and TsaB. TsaD likely plays a direct catalytic role in this reaction. This is tRNA N6-adenosine threonylcarbamoyltransferase from Limosilactobacillus reuteri (strain DSM 20016) (Lactobacillus reuteri).